A 466-amino-acid chain; its full sequence is 5-hydroxytryptamine receptor (466 aa).

Positions 1–21 are disordered; sequence MNASRLPGFNDTSQDQPYPTS. At 1–66 the chain is on the extracellular side; that stretch reads MNASRLPGFN…TSFVLMAVTS (66 aa). Asn-2, Asn-10, Asn-29, Asn-41, Asn-45, and Asn-50 each carry an N-linked (GlcNAc...) asparagine glycan. The segment covering 10 to 21 has biased composition (polar residues); it reads NDTSQDQPYPTS. The chain crosses the membrane as a helical span at residues 67–89; the sequence is VVLALIILATIVGNVFVIAAIII. Residues 90–99 are Cytoplasmic-facing; the sequence is ERNLQNVANY. Residues 100–121 form a helical membrane-spanning segment; the sequence is LVASLAVADLMVACLVMPLGAV. At 122 to 136 the chain is on the extracellular side; sequence YEVSQGWILGPELCD. A disulfide bond links Cys-135 and Cys-215. A helical membrane pass occupies residues 137-158; sequence MWTSSDVLCSSASILHLVAIAT. The Cytoplasmic segment spans residues 159–177; it reads DRYWAVTDVDYIHIRNEKR. Residues 178–200 traverse the membrane as a helical segment; sequence IFTMIVLVWGAALVVSLAPQLGW. Residues 201 to 228 lie on the Extracellular side of the membrane; the sequence is KDPDYLARITQQQKCLVSQDLAYQIFAT. The chain crosses the membrane as a helical span at residues 229–250; sequence MSTFYVPLAVILILYWKIFQTA. The Cytoplasmic portion of the chain corresponds to 251 to 386; it reads RRRIRRRRDP…AKRERKAAKT (136 aa). Disordered regions lie at residues 255–282 and 339–360; these read RRRR…QSAR and VPPS…KPER. Residues 339–353 are compositionally biased toward low complexity; it reads VPPSVSPEKSSSTVT. The chain crosses the membrane as a helical span at residues 387–410; the sequence is LAIITGAFVFCWLPFFIMALVMPI. Residues 411-419 lie on the Extracellular side of the membrane; that stretch reads CQTCVISDY. Residues 420-442 traverse the membrane as a helical segment; the sequence is LASFFLWLGYFNSTLNPVIYTIF. The Cytoplasmic portion of the chain corresponds to 443 to 466; that stretch reads SPDFRQAFARILFGTHRRRRYKKF.

The protein belongs to the G-protein coupled receptor 1 family.

It is found in the cell membrane. This is a receptor for 5-hydroxytryptamine (serotonin), a biogenic hormone that function as a neurotransmitter, a hormone, and a mitogen. This is 5-hydroxytryptamine receptor from Heliothis virescens (Tobacco budworm moth).